We begin with the raw amino-acid sequence, 224 residues long: (S)-2-haloacid dehalogenase H-109 (224 aa).

Catalysis depends on Asp10, which acts as the Nucleophile. An (S)-2-haloacid is bound by residues Leu11–Tyr12, Arg41, and Ser118–Asn119. The segment at Ser175–Asp180 is important for catalytic activity.

It belongs to the HAD-like hydrolase superfamily. S-2-haloalkanoic acid dehalogenase family.

The enzyme catalyses an (S)-2-haloacid + H2O = a (2R)-2-hydroxycarboxylate + a halide anion + H(+). It carries out the reaction (S)-2-chloropropanoate + H2O = (R)-lactate + chloride + H(+). In terms of biological role, catalyzes the hydrolytic dehalogenation of small (S)-2-haloalkanoic acids to yield the corresponding (R)-2-hydroxyalkanoic acids. Acts on acids of short chain lengths, C(2) to C(4), with inversion of configuration at C-2. Active with 2-halogenated carboxylic acids and converts only the S-isomer (or L-isomer) of 2-chloropropionic acid with inversion of configuration to produce R-lactate (or D-isomer). The polypeptide is (S)-2-haloacid dehalogenase H-109 (Pseudomonas putida (Arthrobacter siderocapsulatus)).